Consider the following 423-residue polypeptide: Glucose-1-phosphate adenylyltransferase 1 (423 aa).

Alpha-D-glucose 1-phosphate-binding positions include Y111, G176, 191 to 192 (EK), and S209.

This sequence belongs to the bacterial/plant glucose-1-phosphate adenylyltransferase family. Homotetramer.

The catalysed reaction is alpha-D-glucose 1-phosphate + ATP + H(+) = ADP-alpha-D-glucose + diphosphate. It functions in the pathway glycan biosynthesis; glycogen biosynthesis. Functionally, involved in the biosynthesis of ADP-glucose, a building block required for the elongation reactions to produce glycogen. Catalyzes the reaction between ATP and alpha-D-glucose 1-phosphate (G1P) to produce pyrophosphate and ADP-Glc. In Alkalilimnicola ehrlichii (strain ATCC BAA-1101 / DSM 17681 / MLHE-1), this protein is Glucose-1-phosphate adenylyltransferase 1.